The primary structure comprises 429 residues: 3-phosphoshikimate 1-carboxyvinyltransferase (429 aa).

3-phosphoshikimate-binding residues include K11, S12, and R16. K11 provides a ligand contact to phosphoenolpyruvate. Phosphoenolpyruvate-binding residues include G82 and R110. Residues S155, Q157, D302, and K329 each coordinate 3-phosphoshikimate. Q157 contacts phosphoenolpyruvate. D302 serves as the catalytic Proton acceptor. Phosphoenolpyruvate-binding residues include R333 and R385.

The protein belongs to the EPSP synthase family. In terms of assembly, monomer.

It is found in the cytoplasm. The catalysed reaction is 3-phosphoshikimate + phosphoenolpyruvate = 5-O-(1-carboxyvinyl)-3-phosphoshikimate + phosphate. It participates in metabolic intermediate biosynthesis; chorismate biosynthesis; chorismate from D-erythrose 4-phosphate and phosphoenolpyruvate: step 6/7. Catalyzes the transfer of the enolpyruvyl moiety of phosphoenolpyruvate (PEP) to the 5-hydroxyl of shikimate-3-phosphate (S3P) to produce enolpyruvyl shikimate-3-phosphate and inorganic phosphate. The protein is 3-phosphoshikimate 1-carboxyvinyltransferase of Helicobacter acinonychis (strain Sheeba).